Here is an 87-residue protein sequence, read N- to C-terminus: Toxin Cll5c (87 aa).

The first 19 residues, 1–19 (MNSLLMITACLVLFGTVWA), serve as a signal peptide directing secretion. The region spanning 20 to 85 (KEGYLVNKST…TYPLPNKSCS (66 aa)) is the LCN-type CS-alpha/beta domain. 4 disulfides stabilise this stretch: cysteine 31-cysteine 84, cysteine 35-cysteine 60, cysteine 44-cysteine 65, and cysteine 48-cysteine 67. Positions 86 to 87 (KK) are cleaved as a propeptide — removed by a carboxypeptidase.

The protein belongs to the long (4 C-C) scorpion toxin superfamily. Sodium channel inhibitor family. Beta subfamily. As to expression, expressed by the venom gland.

It localises to the secreted. Beta toxins bind voltage-independently at site-4 of sodium channels (Nav) and shift the voltage of activation toward more negative potentials thereby affecting sodium channel activation and promoting spontaneous and repetitive firing. This chain is Toxin Cll5c, found in Centruroides limpidus (Mexican scorpion).